We begin with the raw amino-acid sequence, 363 residues long: Probable aminomethyltransferase (363 aa).

Belongs to the GcvT family. As to quaternary structure, the glycine cleavage system is composed of four proteins: P, T, L and H.

It catalyses the reaction N(6)-[(R)-S(8)-aminomethyldihydrolipoyl]-L-lysyl-[protein] + (6S)-5,6,7,8-tetrahydrofolate = N(6)-[(R)-dihydrolipoyl]-L-lysyl-[protein] + (6R)-5,10-methylene-5,6,7,8-tetrahydrofolate + NH4(+). The glycine cleavage system catalyzes the degradation of glycine. The sequence is that of Probable aminomethyltransferase from Halobacterium salinarum (strain ATCC 29341 / DSM 671 / R1).